The primary structure comprises 117 residues: Chondroitin proteoglycan 7 (117 aa).

The signal sequence occupies residues Met1–Ala19. Positions Val31 to Val97 are disordered. Low complexity-rich tracts occupy residues Glu32–Ser41 and Glu48–Ser57. Ser66, Ser70, Ser74, Ser84, and Ser88 each carry an O-linked (Xyl...) (chondroitin sulfate) serine glycan. Low complexity predominate over residues Gly75–Gly95. Asn91 carries N-linked (GlcNAc...) asparagine glycosylation.

This Caenorhabditis briggsae protein is Chondroitin proteoglycan 7 (cpg-7).